The chain runs to 66 residues: Small vasohibin-binding protein (66 aa).

The segment covering 1–23 has biased composition (basic and acidic residues); sequence MDPPARKEKTKVKESVSRVEKAK. Positions 1–31 are disordered; it reads MDPPARKEKTKVKESVSRVEKAKQKSAQQEL. Residues 5-52 adopt a coiled-coil conformation; the sequence is ARKEKTKVKESVSRVEKAKQKSAQQELKQRQRAEIYALNRVMTELEQQ.

Belongs to the SVBP family. In terms of assembly, interacts with VASH1 and VASH2.

The protein localises to the cytoplasm. It is found in the secreted. It localises to the cytoskeleton. Its function is as follows. Enhances the tyrosine carboxypeptidase activity of VASH1 and VASH2, thereby promoting the removal of the C-terminal tyrosine residue of alpha-tubulin. This activity is critical for spindle function and accurate chromosome segregation during mitosis since microtubule detyronisation regulates mitotic spindle length and postioning. Also required to enhance the solubility and secretion of VASH1 and VASH2. Plays a role in axon and excitatory synapse formation. The sequence is that of Small vasohibin-binding protein from Homo sapiens (Human).